Here is a 273-residue protein sequence, read N- to C-terminus: Dermonecrotic toxin LhSicTox-alphaIA1ii (273 aa).

The active site involves histidine 5. Glutamate 25 and aspartate 27 together coordinate Mg(2+). Histidine 41 serves as the catalytic Nucleophile. Cystine bridges form between cysteine 45/cysteine 51 and cysteine 47/cysteine 190. Aspartate 85 contributes to the Mg(2+) binding site.

The protein belongs to the arthropod phospholipase D family. Class II subfamily. Mg(2+) serves as cofactor. In terms of tissue distribution, expressed by the venom gland.

It localises to the secreted. It carries out the reaction an N-(acyl)-sphingosylphosphocholine = an N-(acyl)-sphingosyl-1,3-cyclic phosphate + choline. The enzyme catalyses an N-(acyl)-sphingosylphosphoethanolamine = an N-(acyl)-sphingosyl-1,3-cyclic phosphate + ethanolamine. It catalyses the reaction a 1-acyl-sn-glycero-3-phosphocholine = a 1-acyl-sn-glycero-2,3-cyclic phosphate + choline. The catalysed reaction is a 1-acyl-sn-glycero-3-phosphoethanolamine = a 1-acyl-sn-glycero-2,3-cyclic phosphate + ethanolamine. Its function is as follows. Dermonecrotic toxins cleave the phosphodiester linkage between the phosphate and headgroup of certain phospholipids (sphingolipid and lysolipid substrates), forming an alcohol (often choline) and a cyclic phosphate. This toxin acts on sphingomyelin (SM). It may also act on ceramide phosphoethanolamine (CPE), lysophosphatidylcholine (LPC) and lysophosphatidylethanolamine (LPE), but not on lysophosphatidylserine (LPS), and lysophosphatidylglycerol (LPG). It acts by transphosphatidylation, releasing exclusively cyclic phosphate products as second products. Induces dermonecrosis, hemolysis, increased vascular permeability, edema, inflammatory response, and platelet aggregation. This chain is Dermonecrotic toxin LhSicTox-alphaIA1ii, found in Loxosceles hirsuta (Recluse spider).